The sequence spans 427 residues: L-glutamine:2-deoxy-scyllo-inosose aminotransferase (427 aa).

A disordered region spans residues 1–20 (MPLQSSRLAVDNGTPVRGKP). Lys205 is modified (N6-(pyridoxal phosphate)lysine).

It belongs to the DegT/DnrJ/EryC1 family. L-glutamine:2-deoxy-scyllo-inosose/scyllo-inosose aminotransferase subfamily. The cofactor is pyridoxal 5'-phosphate.

The enzyme catalyses 2-deoxy-L-scyllo-inosose + L-glutamine = 2-deoxy-scyllo-inosamine + 2-oxoglutaramate. The catalysed reaction is 3-amino-2,3-dideoxy-scyllo-inosose + L-glutamine = 2-deoxystreptamine + 2-oxoglutaramate. Its pathway is metabolic intermediate biosynthesis; 2-deoxystreptamine biosynthesis; 2-deoxystreptamine from D-glucose 6-phosphate: step 2/4. The protein operates within antibiotic biosynthesis; kanamycin biosynthesis. In terms of biological role, catalyzes the PLP-dependent transamination of 2-deoxy-scyllo-inosose (2-DOI) to form 2-deoxy-scyllo-inosamine (2-DOIA) using L-glutamine as the amino donor. Also catalyzes the transamination of 3-amino-2,3-dideoxy-scyllo-inosose (keto-2-DOIA) into 2-deoxystreptamine (2-DOS). In Streptomyces kanamyceticus, this protein is L-glutamine:2-deoxy-scyllo-inosose aminotransferase (kanB).